Reading from the N-terminus, the 208-residue chain is Capsid protein (208 aa).

Residues 1 to 12 (MPPKRQNTETRK) show a composition bias toward basic and acidic residues. A disordered region spans residues 1 to 23 (MPPKRQNTETRKARQNRARRSRQ). Basic residues predominate over residues 13–22 (ARQNRARRSR).

It localises to the virion. Capsid protein self-assembles to form a quasi spherical capsid, about 25-35 nm. This is Capsid protein from Pelargonium zonate spot virus (isolate Tomato/Italy/1982) (PZSV).